A 619-amino-acid polypeptide reads, in one-letter code: Eukaryotic translation initiation factor 3 subunit D (619 aa).

The tract at residues 99–160 is disordered; the sequence is QKQPHQRGRF…KWGARPPPKI (62 aa). Residues 100–121 show a composition bias toward basic residues; that stretch reads KQPHQRGRFRGNLRNQRGRGRG. An RNA gate region spans residues 288–302; sequence EFDLLTVNETAIEPP. The segment at 588-619 is disordered; that stretch reads TPAATETVATATTEATTPTTATKTTAPAAAQK.

This sequence belongs to the eIF-3 subunit D family. Component of the eukaryotic translation initiation factor 3 (eIF-3) complex.

It localises to the cytoplasm. Functionally, mRNA cap-binding component of the eukaryotic translation initiation factor 3 (eIF-3) complex, which is involved in protein synthesis of a specialized repertoire of mRNAs and, together with other initiation factors, stimulates binding of mRNA and methionyl-tRNAi to the 40S ribosome. The eIF-3 complex specifically targets and initiates translation of a subset of mRNAs involved in cell proliferation. In the eIF-3 complex, eif3d specifically recognizes and binds the 7-methylguanosine cap of a subset of mRNAs. This Aedes aegypti (Yellowfever mosquito) protein is Eukaryotic translation initiation factor 3 subunit D.